Here is a 227-residue protein sequence, read N- to C-terminus: Riboflavin kinase (227 aa).

Residues 1–92 (MSKDYEVFPL…LKRTIDSSTF (92 aa)) are H-T-H motif-like. The interval 93–227 (LTLRGYVVPG…GDKVEVVIPV (135 aa)) is riboflavin kinase. Residue 102–107 (GLGEGA) participates in CDP binding. Mg(2+) is bound by residues Thr131 and Asn133. Residues Thr194 and Glu202 each contribute to the FMN site. CDP is bound at residue 207–210 (VRLR).

This sequence belongs to the archaeal riboflavin kinase family. It depends on Mg(2+) as a cofactor.

The catalysed reaction is riboflavin + CTP = CDP + FMN + H(+). It participates in cofactor biosynthesis; FMN biosynthesis; FMN from riboflavin (CTP route): step 1/1. Functionally, catalyzes the CTP-dependent phosphorylation of riboflavin (vitamin B2) to form flavin mononucleotide (FMN). In Thermofilum pendens (strain DSM 2475 / Hrk 5), this protein is Riboflavin kinase (ribK).